A 573-amino-acid chain; its full sequence is Sulfate adenylyltransferase (573 aa).

The segment at 1-169 (MANPPHGGIL…VEAVNKLNHY (169 aa)) is N-terminal. The tract at residues 170–394 (DYVGLRFTPA…LRESNPPRSK (225 aa)) is catalytic. Gln197 lines the sulfate pocket. ATP contacts are provided by residues 197-200 (QTRN) and 291-294 (GRDH). Active-site residues include Thr198, Arg199, and Asn200. Arg199 is a binding site for sulfate. Residue Ala295 participates in sulfate binding. Leu333 is a binding site for ATP. An allosteric regulation domain; adenylyl-sulfate kinase-like region spans residues 395-573 (QGFTVFLTGY…LESQGFLEKA (179 aa)). 3'-phosphoadenylyl sulfate is bound by residues 434 to 437 (DTVR), Arg451, 477 to 478 (IA), and Arg515.

This sequence in the N-terminal section; belongs to the sulfate adenylyltransferase family. In the C-terminal section; belongs to the APS kinase family. Homohexamer. Dimer of trimers.

It localises to the cytoplasm. It catalyses the reaction sulfate + ATP + H(+) = adenosine 5'-phosphosulfate + diphosphate. The protein operates within sulfur metabolism; hydrogen sulfide biosynthesis; sulfite from sulfate: step 1/3. Its activity is regulated as follows. Allosterically inhibited by 3'-phosphoadenosine 5'-phosphosulfate (PAPS). Its function is as follows. Catalyzes the first intracellular reaction of sulfate assimilation, forming adenosine-5'-phosphosulfate (APS) from inorganic sulfate and ATP. Plays an important role in sulfate activation as a component of the biosynthesis pathway of sulfur-containing amino acids. The polypeptide is Sulfate adenylyltransferase (Coccidioides immitis (strain RS) (Valley fever fungus)).